The following is a 159-amino-acid chain: Ribosomal RNA large subunit methyltransferase H (159 aa).

S-adenosyl-L-methionine-binding positions include leucine 76, glycine 108, and 127–132 (FSKMTF).

It belongs to the RNA methyltransferase RlmH family. As to quaternary structure, homodimer.

It localises to the cytoplasm. The catalysed reaction is pseudouridine(1915) in 23S rRNA + S-adenosyl-L-methionine = N(3)-methylpseudouridine(1915) in 23S rRNA + S-adenosyl-L-homocysteine + H(+). Functionally, specifically methylates the pseudouridine at position 1915 (m3Psi1915) in 23S rRNA. The polypeptide is Ribosomal RNA large subunit methyltransferase H (Bacillus subtilis (strain 168)).